A 525-amino-acid chain; its full sequence is Vanin-like protein 2 (525 aa).

A signal peptide spans 1–27; that stretch reads MAKNYWGFFLFCLALGLMLNLSQQASL. 2 N-linked (GlcNAc...) asparagine glycosylation sites follow: asparagine 20 and asparagine 61. One can recognise a CN hydrolase domain in the interval 33-303; it reads YTAGVVEFEP…RSIYVARVPK (271 aa). Catalysis depends on glutamate 72, which acts as the Proton acceptor. 3 N-linked (GlcNAc...) asparagine glycosylation sites follow: asparagine 99, asparagine 116, and asparagine 124. Lysine 167 serves as the catalytic Proton donor. A glycan (N-linked (GlcNAc...) asparagine) is linked at asparagine 176. Cysteine 199 acts as the Nucleophile in catalysis. 3 N-linked (GlcNAc...) asparagine glycosylation sites follow: asparagine 333, asparagine 348, and asparagine 375.

Belongs to the carbon-nitrogen hydrolase superfamily. BTD/VNN family. As to expression, expressed in third instar larvae.

It is found in the secreted. The polypeptide is Vanin-like protein 2 (Drosophila melanogaster (Fruit fly)).